The primary structure comprises 191 residues: MTFATVYIKPHTPRGDWLASLGQYVGLEIKTVDYKSAEASKFEELFPLKRVPALVTPNGFQLTELIAIVEYIVAKGSKPELSGKTTEERATNTRWLSFFNSDFVQAAGGYFMGPNDEIKQQSLQTMLSLLEYIDKHLSQSKYFTNNTILTADIFAFQIFAMAKQFGVDFTHYPNVERFTGEVSQHPIIKNM.

A GST N-terminal domain is found at 2 to 80 (TFATVYIKPH…YIVAKGSKPE (79 aa)). A GST C-terminal domain is found at 85–191 (TTEERATNTR…VSQHPIIKNM (107 aa)).

Belongs to the GST superfamily.

It catalyses the reaction RX + glutathione = an S-substituted glutathione + a halide anion + H(+). Functionally, conjugation of reduced glutathione to a wide number of exogenous and endogenous hydrophobic electrophiles. The polypeptide is Glutathione S-transferase Y-2 (GSTY2) (Pichia kudriavzevii (Yeast)).